The following is a 404-amino-acid chain: Propionate kinase PduW (404 aa).

The protein belongs to the acetokinase family. PduW subfamily.

The protein resides in the cytoplasm. It carries out the reaction propanoate + ATP = propanoyl phosphate + ADP. It participates in polyol metabolism; 1,2-propanediol degradation. It functions in the pathway organic acid metabolism; propanoate degradation. In terms of biological role, works with phosphate acetyltransferase (pta) to capture exogenous propionate and regenerate propionyl-CoA during degradation of propionate and 1,2-propanediol (1,2-PD). Ectopic expression partially complements a cobB deletion allowing some growth on propionate. Restores growth to an eutQ deletion on ethanolamine and tetrathionate under anoxic conditions. In Salmonella typhimurium (strain LT2 / SGSC1412 / ATCC 700720), this protein is Propionate kinase PduW.